Consider the following 389-residue polypeptide: Flap endonuclease 1 (389 aa).

The N-domain stretch occupies residues 1-110; the sequence is MGIKGLMKLL…GELAKRSDRR (110 aa). Position 35 (D35) interacts with Mg(2+). Positions 48 and 76 each coordinate DNA. D92 lines the Mg(2+) pocket. A disordered region spans residues 103 to 124; the sequence is LAKRSDRRQEAQKALEEATEKG. The segment at 128 to 259 is I-domain; it reads DIDRFNKRLV…KKAYAGIKEH (132 aa). Residues E164, E166, D185, and D187 each contribute to the Mg(2+) site. E164 contributes to the DNA binding site. DNA-binding residues include G237 and D239. Mg(2+) is bound at residue D239. Residues 350–358 are interaction with PCNA; the sequence is SQKRLDSFF. Residues 362–389 form a disordered region; it reads PSANGAKKRKAPAAKGGKKAATAKKGKK. The span at 367-389 shows a compositional bias: basic residues; the sequence is AKKRKAPAAKGGKKAATAKKGKK.

The protein belongs to the XPG/RAD2 endonuclease family. FEN1 subfamily. As to quaternary structure, interacts with PCNA. Three molecules of FEN1 bind to one PCNA trimer with each molecule binding to one PCNA monomer. PCNA stimulates the nuclease activity without altering cleavage specificity. Mg(2+) is required as a cofactor. In terms of processing, phosphorylated. Phosphorylation upon DNA damage induces relocalization to the nuclear plasma.

It is found in the nucleus. The protein localises to the nucleolus. Its subcellular location is the nucleoplasm. The protein resides in the mitochondrion. Functionally, structure-specific nuclease with 5'-flap endonuclease and 5'-3' exonuclease activities involved in DNA replication and repair. During DNA replication, cleaves the 5'-overhanging flap structure that is generated by displacement synthesis when DNA polymerase encounters the 5'-end of a downstream Okazaki fragment. It enters the flap from the 5'-end and then tracks to cleave the flap base, leaving a nick for ligation. Also involved in the long patch base excision repair (LP-BER) pathway, by cleaving within the apurinic/apyrimidinic (AP) site-terminated flap. Acts as a genome stabilization factor that prevents flaps from equilibrating into structures that lead to duplications and deletions. Also possesses 5'-3' exonuclease activity on nicked or gapped double-stranded DNA, and exhibits RNase H activity. Also involved in replication and repair of rDNA and in repairing mitochondrial DNA. The polypeptide is Flap endonuclease 1 (Phytophthora infestans (strain T30-4) (Potato late blight agent)).